Here is a 432-residue protein sequence, read N- to C-terminus: MLGLEKPLSSDISSSSTDTSAISPISVSSMPLSPDKEKKKIKFIRYNPDIPQIVTSFKGYQKLMYQGYRYNIYQVVPEKNFKSWRCVCAKKMPDDGQWCKCRAETTSDNSNACTKNTHNHPPKHRVAEIEFIKSQLINAAFENPDHDAGDLINQACMYLSEGVSFDNKESLKKSLVSARNKEGKPRKPKSKTSTNPLKRMKIEIEEEDENVFKMQRMDNDITGFLPLLNNSISMVKVESPFSTTPTIQIPPPNPPQIHQPQEHSNLLQPAALNGFNNSWMGGIEDPIAMFWANAMLNPSGLDVLSTIAALSKHQLHSQGPTQAATAPAAPLSSNLSVSSFTPQMPKEASMAIPPTQILNLKDLKPLPPLAAIQTSPVIQAASLLRPIPMKNDMGTQTVEEIKVSRCLTSGCGCRVIRICCCDEGRCRRAAAC.

Positions 1 to 33 are disordered; that stretch reads MLGLEKPLSSDISSSSTDTSAISPISVSSMPLS. Residues 9–26 are compositionally biased toward low complexity; sequence SSDISSSSTDTSAISPIS. A DNA-binding region (required for DNA-binding) is located at residues 30–188; that stretch reads MPLSPDKEKK…RNKEGKPRKP (159 aa). The FLYWCH-type zinc finger occupies 53–120; the sequence is IVTSFKGYQK…NACTKNTHNH (68 aa). A disordered region spans residues 174–195; sequence SLVSARNKEGKPRKPKSKTSTN.

The protein localises to the nucleus. Putative transcription factor. Binds to specific sequence motif 5'-[TC][AGT]TGCC[GA][AT]-3' in regulatory elements of target genes such as myosin myo-2. May modulate gene expression, perhaps acting in opposition to transcription factor pha-4. Involved in morphogenesis, perhaps especially in formation of the pharynx. Plays roles in molting, feeding and morphology. In Caenorhabditis briggsae, this protein is FLYWCH-type zinc finger-containing protein peb-1.